Here is a 213-residue protein sequence, read N- to C-terminus: Phosphoribosyl-dephospho-CoA transferase (213 aa).

Active-site residues include Asp135 and Asp137.

It belongs to the MdcG family.

It catalyses the reaction apo-[malonate decarboxylase ACP] + 2'-(5''-triphospho-alpha-D-ribosyl)-3'-dephospho-CoA = holo-[malonate decarboxylase ACP] + diphosphate. Its function is as follows. Transfers 2'-(5-triphosphoribosyl)-3'-dephosphocoenzyme-A to the apo-[acyl-carrier-protein] of the malonate decarboxylase to yield holo-[acyl-carrier-protein]. This is Phosphoribosyl-dephospho-CoA transferase from Xanthomonas axonopodis pv. citri (strain 306).